A 58-amino-acid polypeptide reads, in one-letter code: Large ribosomal subunit protein uL30 (58 aa).

Belongs to the universal ribosomal protein uL30 family. As to quaternary structure, part of the 50S ribosomal subunit.

This is Large ribosomal subunit protein uL30 from Cytophaga hutchinsonii (strain ATCC 33406 / DSM 1761 / CIP 103989 / NBRC 15051 / NCIMB 9469 / D465).